The sequence spans 115 residues: Large ribosomal subunit protein uL22 (115 aa).

This sequence belongs to the universal ribosomal protein uL22 family. As to quaternary structure, part of the 50S ribosomal subunit.

In terms of biological role, this protein binds specifically to 23S rRNA; its binding is stimulated by other ribosomal proteins, e.g. L4, L17, and L20. It is important during the early stages of 50S assembly. It makes multiple contacts with different domains of the 23S rRNA in the assembled 50S subunit and ribosome. Functionally, the globular domain of the protein is located near the polypeptide exit tunnel on the outside of the subunit, while an extended beta-hairpin is found that lines the wall of the exit tunnel in the center of the 70S ribosome. The polypeptide is Large ribosomal subunit protein uL22 (rplV) (Wolbachia pipientis wMel).